Reading from the N-terminus, the 490-residue chain is Cobyric acid synthase (490 aa).

The GATase cobBQ-type domain maps to 253–440; the sequence is KLRVAAPAAP…LHGVFDEPAA (188 aa). Catalysis depends on C334, which acts as the Nucleophile. H432 is an active-site residue.

It belongs to the CobB/CobQ family. CobQ subfamily.

Its pathway is cofactor biosynthesis; adenosylcobalamin biosynthesis. In terms of biological role, catalyzes amidations at positions B, D, E, and G on adenosylcobyrinic A,C-diamide. NH(2) groups are provided by glutamine, and one molecule of ATP is hydrogenolyzed for each amidation. The chain is Cobyric acid synthase from Chromobacterium violaceum (strain ATCC 12472 / DSM 30191 / JCM 1249 / CCUG 213 / NBRC 12614 / NCIMB 9131 / NCTC 9757 / MK).